A 396-amino-acid chain; its full sequence is Elongation factor Tu (396 aa).

A tr-type G domain is found at 10–205 (KPHVNIGTIG…ACDDNIPDPV (196 aa)). Residues 19–26 (GHVDHGKT) are G1. Residue 19-26 (GHVDHGKT) coordinates GTP. Threonine 26 provides a ligand contact to Mg(2+). The G2 stretch occupies residues 62–66 (GITIN). Residues 83-86 (DAPG) form a G3 region. GTP-binding positions include 83–87 (DAPGH) and 138–141 (NKCD). The tract at residues 138–141 (NKCD) is G4. Residues 175–177 (SAL) are G5.

Belongs to the TRAFAC class translation factor GTPase superfamily. Classic translation factor GTPase family. EF-Tu/EF-1A subfamily. As to quaternary structure, monomer.

Its subcellular location is the cytoplasm. The catalysed reaction is GTP + H2O = GDP + phosphate + H(+). GTP hydrolase that promotes the GTP-dependent binding of aminoacyl-tRNA to the A-site of ribosomes during protein biosynthesis. The chain is Elongation factor Tu from Corynebacterium glutamicum (strain R).